The chain runs to 565 residues: uncharacterized protein (565 aa).

A signal peptide spans 1-19 (MRWLATFVALLIAISSVSA). Positions 494 to 504 (TGAENVTNNSV) are enriched in polar residues. The tract at residues 494–525 (TGAENVTNNSVTATTPPAKASQQTPAPATPPV) is disordered. Residues 505–519 (TATTPPAKASQQTPA) show a composition bias toward low complexity.

This is an uncharacterized protein from Archaeoglobus fulgidus (strain ATCC 49558 / DSM 4304 / JCM 9628 / NBRC 100126 / VC-16).